The following is a 469-amino-acid chain: Serine hydroxymethyltransferase, cytosolic (469 aa).

T20 carries the post-translational modification Phosphothreonine. S26 is modified (phosphoserine). K248 carries the post-translational modification N6-(pyridoxal phosphate)lysine. Phosphoserine is present on S429. K456 is covalently cross-linked (Glycyl lysine isopeptide (Lys-Gly) (interchain with G-Cter in ubiquitin)).

The protein belongs to the SHMT family. Homotetramer. It depends on pyridoxal 5'-phosphate as a cofactor.

It is found in the cytoplasm. The enzyme catalyses (6R)-5,10-methylene-5,6,7,8-tetrahydrofolate + glycine + H2O = (6S)-5,6,7,8-tetrahydrofolate + L-serine. Its pathway is one-carbon metabolism; tetrahydrofolate interconversion. Functionally, interconversion of serine and glycine. This Saccharomyces cerevisiae (strain ATCC 204508 / S288c) (Baker's yeast) protein is Serine hydroxymethyltransferase, cytosolic.